The primary structure comprises 563 residues: Testis-expressed basic protein 1 (563 aa).

A helical membrane pass occupies residues 3-23 (VLEITLAVILTLLGLAILAIL). The interval 56–81 (GSRHAYSTQSDTSYDNRERSKRDYTP) is disordered. Residues 69 to 79 (YDNRERSKRDY) are compositionally biased toward basic and acidic residues. Residues 99-119 (ELILLLMCFILALSRSSIGSI) traverse the membrane as a helical segment. Positions 311 to 563 (SEMSIPQGQG…GRKYNKKVEE (253 aa)) are disordered. Residues 367–383 (QVEKSEMGVPRRQESQV) are compositionally biased toward basic and acidic residues. Over residues 384–395 (KKSQSGVSKGQE) the composition is skewed to low complexity. 2 stretches are compositionally biased toward basic and acidic residues: residues 412 to 447 (QVEKSELKVPKGQEGQVEKTEADVPKEQEVQEKKSE) and 485 to 544 (EAQE…EKSK).

It localises to the membrane. In Homo sapiens (Human), this protein is Testis-expressed basic protein 1.